The following is a 1155-amino-acid chain: DNA-directed RNA polymerase subunit beta (1155 aa).

This sequence belongs to the RNA polymerase beta chain family. The RNAP catalytic core consists of 2 alpha, 1 beta, 1 beta' and 1 omega subunit. When a sigma factor is associated with the core the holoenzyme is formed, which can initiate transcription.

The catalysed reaction is RNA(n) + a ribonucleoside 5'-triphosphate = RNA(n+1) + diphosphate. Functionally, DNA-dependent RNA polymerase catalyzes the transcription of DNA into RNA using the four ribonucleoside triphosphates as substrates. This chain is DNA-directed RNA polymerase subunit beta, found in Borrelia garinii subsp. bavariensis (strain ATCC BAA-2496 / DSM 23469 / PBi) (Borreliella bavariensis).